We begin with the raw amino-acid sequence, 190 residues long: Small ribosomal subunit protein eS7 (190 aa).

It belongs to the eukaryotic ribosomal protein eS7 family. As to quaternary structure, component of the small ribosomal subunit. Part of the small subunit (SSU) processome, composed of more than 70 proteins and the RNA chaperone small nucleolar RNA (snoRNA) U3.

It localises to the cytoplasm. The protein localises to the cytoskeleton. Its subcellular location is the microtubule organizing center. It is found in the centrosome. The protein resides in the nucleus. It localises to the nucleolus. Component of the small ribosomal subunit. The ribosome is a large ribonucleoprotein complex responsible for the synthesis of proteins in the cell. Required for rRNA maturation. Part of the small subunit (SSU) processome, first precursor of the small eukaryotic ribosomal subunit. During the assembly of the SSU processome in the nucleolus, many ribosome biogenesis factors, an RNA chaperone and ribosomal proteins associate with the nascent pre-rRNA and work in concert to generate RNA folding, modifications, rearrangements and cleavage as well as targeted degradation of pre-ribosomal RNA by the RNA exosome. The sequence is that of Small ribosomal subunit protein eS7 (RpS7) from Spodoptera frugiperda (Fall armyworm).